We begin with the raw amino-acid sequence, 309 residues long: Histidine protein methyltransferase 1 homolog (309 aa).

Disordered stretches follow at residues 1–37 (MSFK…FDSS) and 79–111 (KPFK…NNKD). Over residues 25–37 (EESKLDISEFDSS) the composition is skewed to basic and acidic residues. Low complexity predominate over residues 84–109 (NQDNNNDNNVNSNDKNDNNNNNNNNN). Residues 132-136 (LWECS), glycine 159, 179-181 (QDY), 209-211 (GDW), and serine 229 contribute to the S-adenosyl-L-methionine site.

This sequence belongs to the methyltransferase superfamily. METTL18 family.

It localises to the cytoplasm. The protein resides in the cytosol. The protein localises to the nucleus. Its subcellular location is the nucleolus. It carries out the reaction L-histidyl-[protein] + S-adenosyl-L-methionine = N(tele)-methyl-L-histidyl-[protein] + S-adenosyl-L-homocysteine + H(+). Its function is as follows. Protein-L-histidine N-tele-methyltransferase that probably monomethylates RPL3. Through the methylation of RPL3 may regulate the dynamics of pre-rRNA processing, ribosome biogenesis, and translation. This chain is Histidine protein methyltransferase 1 homolog, found in Dictyostelium discoideum (Social amoeba).